Consider the following 520-residue polypeptide: T-box transcription factor TBX22 (520 aa).

A disordered region spans residues 1–91 (MALSSRARAF…NSSESLEEKD (91 aa)). A compositionally biased stretch (basic and acidic residues) spans 33-49 (PELREKKGGEEEEERRS). A compositionally biased stretch (low complexity) spans 67 to 84 (STSASSGCGSDSGYGNSS). The segment at residues 96–283 (LQGSELWKRF…RNPFAKGFRD (188 aa)) is a DNA-binding region (T-box).

As to expression, seems to be expressed at a low level.

The protein localises to the nucleus. In terms of biological role, probable transcriptional regulator involved in developmental processes. This is major determinant crucial to palatogenesis. In Homo sapiens (Human), this protein is T-box transcription factor TBX22 (TBX22).